A 147-amino-acid chain; its full sequence is Hemoglobin subunit beta (147 aa).

Positions 2–147 (EWTDAERSAI…VVSALCRQYH (146 aa)) constitute a Globin domain. The heme b site is built by His63 and His92.

This sequence belongs to the globin family. As to quaternary structure, heterotetramer of two alpha chains and two beta chains. Red blood cells.

Its function is as follows. Involved in oxygen transport from gills to the various peripheral tissues. The chain is Hemoglobin subunit beta (hbb) from Carassius auratus (Goldfish).